The sequence spans 1008 residues: PWWP domain-containing protein 3 (1008 aa).

Residues 78 to 122 (VSSLLKLKEDVEEEEEEEEEEEEEEEDGEDEEEEEEEEEEEEEEE) adopt a coiled-coil conformation. The segment at 84 to 124 (LKEDVEEEEEEEEEEEEEEEDGEDEEEEEEEEEEEEEEEHG) is disordered. The segment covering 87 to 122 (DVEEEEEEEEEEEEEEEDGEDEEEEEEEEEEEEEEE) has biased composition (acidic residues). The 62-residue stretch at 127-188 (VGDFVWGKIK…ASQLKPFAES (62 aa)) folds into the PWWP domain. 3 disordered regions span residues 307 to 339 (EYHE…GLQW), 399 to 606 (ETEP…LGQE), and 668 to 874 (NHKF…GPGS). Positions 321-330 (NNDDDDDDEE) are enriched in acidic residues. The segment covering 399 to 409 (ETEPADGDVKS) has biased composition (basic and acidic residues). The segment covering 473-490 (DDGDDDGSGDKEESEEKE) has biased composition (acidic residues). Basic and acidic residues-rich tracts occupy residues 511 to 522 (RFDDSVVERSTE), 677 to 687 (SSDKEKEELSE), and 707 to 725 (QKAE…TDKH). A compositionally biased stretch (basic residues) spans 726–738 (GKMKKERKRKKSE). Basic and acidic residues-rich tracts occupy residues 739 to 758 (SKKE…ESTK), 768 to 787 (SKKQ…ESTK), and 794 to 818 (NPES…ESTK). 3 short sequence motifs (nuclear localization signal) span residues 786–793 (TKKERKRK), 809–816 (TRKESVES), and 841–848 (EKKKKKKR). Positions 804–824 (VEEEETRKESVESTKKERKRK) form a coiled coil. Over residues 842–854 (KKKKKKREGKSKK) the composition is skewed to basic residues.

The protein belongs to the PDP family. As to quaternary structure, interacts with DEK3. Binds to LHP1, MSI4/FVE and MSI5. Component of the PRC2 (polycomb repressive complex 2) complex which regulates histone methylation on histone H3K27.

The protein localises to the nucleus. Its function is as follows. Together with PDP1, PDP2 and PDP6, interacts with MSI4/FVE and MSI5 to suppress FLC, MAF4 and MAF5 expression by regulating the function of the PRC2 complex and modulating H3K27me3 level, thereby promoting flowering. This chain is PWWP domain-containing protein 3, found in Arabidopsis thaliana (Mouse-ear cress).